We begin with the raw amino-acid sequence, 558 residues long: Dihydroxy-acid dehydratase (558 aa).

Cys-50 lines the [2Fe-2S] cluster pocket. Residue Asp-82 participates in Mg(2+) binding. Cys-123 contributes to the [2Fe-2S] cluster binding site. Mg(2+) is bound by residues Asp-124 and Lys-125. N6-carboxylysine is present on Lys-125. Residue Cys-195 participates in [2Fe-2S] cluster binding. Position 447 (Glu-447) interacts with Mg(2+). Ser-472 (proton acceptor) is an active-site residue.

The protein belongs to the IlvD/Edd family. In terms of assembly, homodimer. It depends on [2Fe-2S] cluster as a cofactor. Mg(2+) serves as cofactor.

It carries out the reaction (2R)-2,3-dihydroxy-3-methylbutanoate = 3-methyl-2-oxobutanoate + H2O. The catalysed reaction is (2R,3R)-2,3-dihydroxy-3-methylpentanoate = (S)-3-methyl-2-oxopentanoate + H2O. Its pathway is amino-acid biosynthesis; L-isoleucine biosynthesis; L-isoleucine from 2-oxobutanoate: step 3/4. It participates in amino-acid biosynthesis; L-valine biosynthesis; L-valine from pyruvate: step 3/4. Its function is as follows. Functions in the biosynthesis of branched-chain amino acids. Catalyzes the dehydration of (2R,3R)-2,3-dihydroxy-3-methylpentanoate (2,3-dihydroxy-3-methylvalerate) into 2-oxo-3-methylpentanoate (2-oxo-3-methylvalerate) and of (2R)-2,3-dihydroxy-3-methylbutanoate (2,3-dihydroxyisovalerate) into 2-oxo-3-methylbutanoate (2-oxoisovalerate), the penultimate precursor to L-isoleucine and L-valine, respectively. The sequence is that of Dihydroxy-acid dehydratase from Saccharolobus islandicus (strain L.S.2.15 / Lassen #1) (Sulfolobus islandicus).